The following is a 510-amino-acid chain: NAD(P)H-quinone oxidoreductase subunit 2 B, chloroplastic (510 aa).

13 consecutive transmembrane segments (helical) span residues L24–L44, I57–F77, I99–I119, M124–C144, I150–T170, Y183–G203, P227–A247, W295–I315, M323–D343, G347–A367, A395–F415, L418–L438, and M484–I504.

This sequence belongs to the complex I subunit 2 family. As to quaternary structure, NDH is composed of at least 16 different subunits, 5 of which are encoded in the nucleus.

It localises to the plastid. The protein resides in the chloroplast thylakoid membrane. It catalyses the reaction a plastoquinone + NADH + (n+1) H(+)(in) = a plastoquinol + NAD(+) + n H(+)(out). It carries out the reaction a plastoquinone + NADPH + (n+1) H(+)(in) = a plastoquinol + NADP(+) + n H(+)(out). Functionally, NDH shuttles electrons from NAD(P)H:plastoquinone, via FMN and iron-sulfur (Fe-S) centers, to quinones in the photosynthetic chain and possibly in a chloroplast respiratory chain. The immediate electron acceptor for the enzyme in this species is believed to be plastoquinone. Couples the redox reaction to proton translocation, and thus conserves the redox energy in a proton gradient. The chain is NAD(P)H-quinone oxidoreductase subunit 2 B, chloroplastic from Chloranthus spicatus (Chulantree).